The primary structure comprises 119 residues: MKYPLLALIKLYQWTISPLLGPVCRYYPSCSHYGYTSIDRHGAIKGTALTAWRILRCNPWSPGGVDHVPPRKRPRWHELLRNALRGEKGGESAADVPSGGSVSEPPGPAAETSPNAQGA.

The tract at residues 82 to 119 (NALRGEKGGESAADVPSGGSVSEPPGPAAETSPNAQGA) is disordered.

It belongs to the UPF0161 family.

The protein localises to the cell membrane. Could be involved in insertion of integral membrane proteins into the membrane. The sequence is that of Putative membrane protein insertion efficiency factor from Streptomyces griseus subsp. griseus (strain JCM 4626 / CBS 651.72 / NBRC 13350 / KCC S-0626 / ISP 5235).